Here is an 88-residue protein sequence, read N- to C-terminus: CRISPR-associated endoribonuclease Cas2 2 (88 aa).

Mg(2+) is bound at residue Asp8.

This sequence belongs to the CRISPR-associated endoribonuclease Cas2 protein family. In terms of assembly, homodimer, forms a heterotetramer with a Cas1 homodimer. The cofactor is Mg(2+).

CRISPR (clustered regularly interspaced short palindromic repeat), is an adaptive immune system that provides protection against mobile genetic elements (viruses, transposable elements and conjugative plasmids). CRISPR clusters contain sequences complementary to antecedent mobile elements and target invading nucleic acids. CRISPR clusters are transcribed and processed into CRISPR RNA (crRNA). Functions as a ssRNA-specific endoribonuclease. Involved in the integration of spacer DNA into the CRISPR cassette. The chain is CRISPR-associated endoribonuclease Cas2 2 (cas22) from Saccharolobus solfataricus (strain ATCC 35092 / DSM 1617 / JCM 11322 / P2) (Sulfolobus solfataricus).